The chain runs to 312 residues: MRIDLSLKPTPVQFLKRLSEKYGFNIYVKRDDLTELVGSGNKIRKLEYLLWEALKKGATTVFTCGGLQSNHARATAYVSRRYGLKPVLFLRKGEKVLNGNLLLDILLGAEIVEVSPEEYERIDEIFDVHKKMREKKGEKVYVIPEGGSNSLGAFGYFNAVLEMKDQLNLESFDAIVCAVGSGGTIAGLSAGISFLEYHVPVVGVNVTTKNSDYFVGKVKRIISGMEEYGLRVNETVFEVVDDYRGPGYAIPSSEDVEILKEVASIEGIILDPVYTAKAFRGMIEMFRNSEKNVLFIHTGGIFGLFAQSRRLV.

Lys-42 bears the N6-(pyridoxal phosphate)lysine mark.

This sequence belongs to the ACC deaminase/D-cysteine desulfhydrase family. Pyridoxal 5'-phosphate is required as a cofactor.

The enzyme catalyses 1-aminocyclopropane-1-carboxylate + H2O = 2-oxobutanoate + NH4(+). This is Putative 1-aminocyclopropane-1-carboxylate deaminase from Thermotoga maritima (strain ATCC 43589 / DSM 3109 / JCM 10099 / NBRC 100826 / MSB8).